A 296-amino-acid polypeptide reads, in one-letter code: 4-hydroxybenzoate octaprenyltransferase (296 aa).

Transmembrane regions (helical) follow at residues 28–48 (PIGI…AGKG), 52–72 (LNTV…GCVI), 102–122 (ALVL…FTNS), 123–140 (TTIW…CYPF), 146–166 (YYPQ…AFTA), 169–189 (GELP…TVGY), 219–239 (VIIL…GSRF), 241–261 (LGAF…WEFW), and 275–295 (FLHN…DYAL).

Belongs to the UbiA prenyltransferase family. The cofactor is Mg(2+).

The protein resides in the cell inner membrane. It carries out the reaction all-trans-octaprenyl diphosphate + 4-hydroxybenzoate = 4-hydroxy-3-(all-trans-octaprenyl)benzoate + diphosphate. It participates in cofactor biosynthesis; ubiquinone biosynthesis. Its function is as follows. Catalyzes the prenylation of para-hydroxybenzoate (PHB) with an all-trans polyprenyl group. Mediates the second step in the final reaction sequence of ubiquinone-8 (UQ-8) biosynthesis, which is the condensation of the polyisoprenoid side chain with PHB, generating the first membrane-bound Q intermediate 3-octaprenyl-4-hydroxybenzoate. The sequence is that of 4-hydroxybenzoate octaprenyltransferase from Pseudomonas syringae pv. tomato (strain ATCC BAA-871 / DC3000).